We begin with the raw amino-acid sequence, 281 residues long: Pantothenate synthetase (281 aa).

ATP is bound at residue 30 to 37 (MGYLHEGH). His37 acts as the Proton donor in catalysis. Residue Gln61 participates in (R)-pantoate binding. Gln61 contacts beta-alanine. Residue 147–150 (GEKD) coordinates ATP. Gln153 is a binding site for (R)-pantoate. ATP is bound by residues Ile176 and 184-187 (KSSR).

Belongs to the pantothenate synthetase family. Homodimer.

It localises to the cytoplasm. The enzyme catalyses (R)-pantoate + beta-alanine + ATP = (R)-pantothenate + AMP + diphosphate + H(+). Its pathway is cofactor biosynthesis; (R)-pantothenate biosynthesis; (R)-pantothenate from (R)-pantoate and beta-alanine: step 1/1. Functionally, catalyzes the condensation of pantoate with beta-alanine in an ATP-dependent reaction via a pantoyl-adenylate intermediate. This chain is Pantothenate synthetase, found in Clostridium botulinum (strain Loch Maree / Type A3).